A 549-amino-acid chain; its full sequence is Glucose-6-phosphate isomerase (549 aa).

N6-acetyllysine occurs at positions 80, 228, and 234. Glu355 acts as the Proton donor in catalysis. Residues His386 and Lys514 contribute to the active site.

Belongs to the GPI family.

It is found in the cytoplasm. It carries out the reaction alpha-D-glucose 6-phosphate = beta-D-fructose 6-phosphate. It functions in the pathway carbohydrate biosynthesis; gluconeogenesis. The protein operates within carbohydrate degradation; glycolysis; D-glyceraldehyde 3-phosphate and glycerone phosphate from D-glucose: step 2/4. Its function is as follows. Catalyzes the reversible isomerization of glucose-6-phosphate to fructose-6-phosphate. The protein is Glucose-6-phosphate isomerase of Escherichia coli O17:K52:H18 (strain UMN026 / ExPEC).